A 396-amino-acid polypeptide reads, in one-letter code: Ribosomal RNA large subunit methyltransferase I (396 aa).

Residues 2 to 79 enclose the PUA domain; that stretch reads TSAVYLQAGR…EKEVIDQHFF (78 aa).

It belongs to the methyltransferase superfamily. RlmI family.

The protein resides in the cytoplasm. It catalyses the reaction cytidine(1962) in 23S rRNA + S-adenosyl-L-methionine = 5-methylcytidine(1962) in 23S rRNA + S-adenosyl-L-homocysteine + H(+). Functionally, specifically methylates the cytosine at position 1962 (m5C1962) of 23S rRNA. The sequence is that of Ribosomal RNA large subunit methyltransferase I from Pseudoalteromonas translucida (strain TAC 125).